The primary structure comprises 211 residues: Pyrrolidone-carboxylate peptidase 1 (211 aa).

Active-site residues include Glu-79, Cys-142, and His-164.

It belongs to the peptidase C15 family. As to quaternary structure, homotetramer.

The protein localises to the cytoplasm. The enzyme catalyses Release of an N-terminal pyroglutamyl group from a polypeptide, the second amino acid generally not being Pro.. In terms of biological role, removes 5-oxoproline from various penultimate amino acid residues except L-proline. The protein is Pyrrolidone-carboxylate peptidase 1 (pcp1) of Saccharolobus solfataricus (strain ATCC 35092 / DSM 1617 / JCM 11322 / P2) (Sulfolobus solfataricus).